The sequence spans 310 residues: p-hydroxybenzoic acid efflux pump subunit AaeA (310 aa).

A helical transmembrane segment spans residues 12-32 (AITLVLVILAFIAIFRAWVYY).

This sequence belongs to the membrane fusion protein (MFP) (TC 8.A.1) family.

The protein localises to the cell inner membrane. Functionally, forms an efflux pump with AaeB. This Salmonella schwarzengrund (strain CVM19633) protein is p-hydroxybenzoic acid efflux pump subunit AaeA.